The primary structure comprises 357 residues: D-alanine--D-alanine ligase (357 aa).

The region spanning 145–339 (KEVMLYHGIQ…YGDLVMDIVN (195 aa)) is the ATP-grasp domain. 172–225 (PFDFPVVVKPTSGGSSVGTHIIHNQEELESGLEDVFRFDNSAIVEEFTPGREFS) contributes to the ATP binding site. Mg(2+)-binding residues include aspartate 294, glutamate 306, and asparagine 308.

The protein belongs to the D-alanine--D-alanine ligase family. Mg(2+) is required as a cofactor. It depends on Mn(2+) as a cofactor.

The protein localises to the cytoplasm. It carries out the reaction 2 D-alanine + ATP = D-alanyl-D-alanine + ADP + phosphate + H(+). It participates in cell wall biogenesis; peptidoglycan biosynthesis. Cell wall formation. In Lacticaseibacillus paracasei (strain ATCC 334 / BCRC 17002 / CCUG 31169 / CIP 107868 / KCTC 3260 / NRRL B-441) (Lactobacillus paracasei), this protein is D-alanine--D-alanine ligase.